Consider the following 287-residue polypeptide: 4,4'-diapophytoene synthase (287 aa).

(2E,6E)-farnesyl diphosphate is bound by residues 18-21 (HSKS), tyrosine 41, and arginine 45. Residues aspartate 48 and aspartate 52 each contribute to the Mg(2+) site. Glutamine 165 provides a ligand contact to (2E,6E)-farnesyl diphosphate. A Mg(2+)-binding site is contributed by asparagine 168. Residue arginine 171 participates in (2E,6E)-farnesyl diphosphate binding. Aspartate 172 lines the Mg(2+) pocket. Tyrosine 248 is a binding site for (2E,6E)-farnesyl diphosphate.

The protein belongs to the phytoene/squalene synthase family. CrtM subfamily. Mg(2+) serves as cofactor.

It carries out the reaction 2 (2E,6E)-farnesyl diphosphate = 15-cis-4,4'-diapophytoene + 2 diphosphate. The protein operates within carotenoid biosynthesis; staphyloxanthin biosynthesis; staphyloxanthin from farnesyl diphosphate: step 1/5. Involved in the biosynthesis of the yellow-orange carotenoid staphyloxanthin, which plays a role in the virulence via its protective function against oxidative stress. Catalyzes the head-to-head condensation of two molecules of farnesyl diphosphate (FPP) into the colorless C(30) carotenoid 4,4'-diapophytoene (dehydrosqualene). The sequence is that of 4,4'-diapophytoene synthase from Staphylococcus aureus.